The following is a 221-amino-acid chain: Imidazoleglycerol-phosphate dehydratase (221 aa).

This sequence belongs to the imidazoleglycerol-phosphate dehydratase family.

The enzyme catalyses D-erythro-1-(imidazol-4-yl)glycerol 3-phosphate = 3-(imidazol-4-yl)-2-oxopropyl phosphate + H2O. Its pathway is amino-acid biosynthesis; L-histidine biosynthesis; L-histidine from 5-phospho-alpha-D-ribose 1-diphosphate: step 6/9. The polypeptide is Imidazoleglycerol-phosphate dehydratase (HIS3) (Kluyveromyces marxianus (Yeast)).